The following is a 66-amino-acid chain: MAVPKRRKSKSKVRTKRAHHAIGKPNLVPCPNCNVYRLPHRICPTCGFYKTGIVLEPKVKKPKEEN.

The disordered stretch occupies residues 1–20 (MAVPKRRKSKSKVRTKRAHH).

It belongs to the bacterial ribosomal protein bL32 family.

The protein is Large ribosomal subunit protein bL32 of Leptospira borgpetersenii serovar Hardjo-bovis (strain JB197).